The chain runs to 321 residues: Lipoyl synthase (321 aa).

Cys-68, Cys-73, Cys-79, Cys-94, Cys-98, Cys-101, and Ser-308 together coordinate [4Fe-4S] cluster. The Radical SAM core domain occupies Phe-80–Thr-297.

The protein belongs to the radical SAM superfamily. Lipoyl synthase family. [4Fe-4S] cluster serves as cofactor.

It localises to the cytoplasm. The enzyme catalyses [[Fe-S] cluster scaffold protein carrying a second [4Fe-4S](2+) cluster] + N(6)-octanoyl-L-lysyl-[protein] + 2 oxidized [2Fe-2S]-[ferredoxin] + 2 S-adenosyl-L-methionine + 4 H(+) = [[Fe-S] cluster scaffold protein] + N(6)-[(R)-dihydrolipoyl]-L-lysyl-[protein] + 4 Fe(3+) + 2 hydrogen sulfide + 2 5'-deoxyadenosine + 2 L-methionine + 2 reduced [2Fe-2S]-[ferredoxin]. It participates in protein modification; protein lipoylation via endogenous pathway; protein N(6)-(lipoyl)lysine from octanoyl-[acyl-carrier-protein]: step 2/2. Functionally, catalyzes the radical-mediated insertion of two sulfur atoms into the C-6 and C-8 positions of the octanoyl moiety bound to the lipoyl domains of lipoate-dependent enzymes, thereby converting the octanoylated domains into lipoylated derivatives. This chain is Lipoyl synthase, found in Klebsiella pneumoniae (strain 342).